Consider the following 109-residue polypeptide: ATPase inhibitor, mitochondrial (109 aa).

Residues 1-25 (MAATALAARTRQAVWSVWAMQGRGF) constitute a mitochondrion transit peptide. Residues 26–52 (GSESGDNVRSSAGAVRDAGGAFGKREQ) are disordered. The interval 26-52 (GSESGDNVRSSAGAVRDAGGAFGKREQ) is N-terminal inhibitory region. Residues 69–109 (ALKKHHENEISHHAKEIERLQKEIERHKQSIKKLKQSEDDD) are a coiled coil. The tract at residues 74–106 (HENEISHHAKEIERLQKEIERHKQSIKKLKQSE) is antiparallel alpha-helical coiled coil region. The residue at position 103 (K103) is an N6-succinyllysine.

It belongs to the ATPase inhibitor family. Homodimer; represents the active form and is present at a pH value below 6.5. Homotetramer; represents the inactive form and is present at a pH value above 7.0.

Its subcellular location is the mitochondrion. Its function is as follows. Endogenous F(1)F(o)-ATPase inhibitor limiting ATP depletion when the mitochondrial membrane potential falls below a threshold and the F(1)F(o)-ATP synthase starts hydrolyzing ATP to pump protons out of the mitochondrial matrix. Required to avoid the consumption of cellular ATP when the F(1)F(o)-ATP synthase enzyme acts as an ATP hydrolase. Indirectly acts as a regulator of heme synthesis in erythroid tissues: regulates heme synthesis by modulating the mitochondrial pH and redox potential, allowing FECH to efficiently catalyze the incorporation of iron into protoporphyrin IX to produce heme. This is ATPase inhibitor, mitochondrial from Bos taurus (Bovine).